A 431-amino-acid polypeptide reads, in one-letter code: UDP-N-acetylglucosamine 1-carboxyvinyltransferase (431 aa).

24–25 (KN) provides a ligand contact to phosphoenolpyruvate. Residue Arg-95 participates in UDP-N-acetyl-alpha-D-glucosamine binding. The Proton donor role is filled by Asp-119. Asp-314 and Met-336 together coordinate UDP-N-acetyl-alpha-D-glucosamine.

Belongs to the EPSP synthase family. MurA subfamily.

Its subcellular location is the cytoplasm. It catalyses the reaction phosphoenolpyruvate + UDP-N-acetyl-alpha-D-glucosamine = UDP-N-acetyl-3-O-(1-carboxyvinyl)-alpha-D-glucosamine + phosphate. Its pathway is cell wall biogenesis; peptidoglycan biosynthesis. Cell wall formation. Adds enolpyruvyl to UDP-N-acetylglucosamine. This is UDP-N-acetylglucosamine 1-carboxyvinyltransferase from Bradyrhizobium diazoefficiens (strain JCM 10833 / BCRC 13528 / IAM 13628 / NBRC 14792 / USDA 110).